Reading from the N-terminus, the 302-residue chain is Cyclin-C (302 aa).

The 107-residue stretch at 46–152 (NFITAVATEG…VYDSEFILVE (107 aa)) folds into the Cyclin N-terminal domain. The segment at 281-302 (LPKPNQQPPPQQQHQHQQGYHL) is disordered. A compositionally biased stretch (low complexity) spans 292 to 302 (QQHQHQQGYHL).

Belongs to the cyclin family. Cyclin C subfamily. In terms of assembly, component of the Mediator complex.

Its subcellular location is the nucleus. Functionally, component of the Mediator complex, a coactivator involved in regulated gene transcription of nearly all RNA polymerase II-dependent genes. Mediator functions as a bridge to convey information from gene-specific regulatory proteins to the basal RNA polymerase II transcription machinery. Mediator is recruited to promoters by direct interactions with regulatory proteins and serves as a scaffold for the assembly of a functional preinitiation complex with RNA polymerase II and the general transcription factors. Binds to and activates cyclin-dependent kinase cdk-8 that phosphorylates the CTD (C-terminal domain) of the large subunit of RNA polymerase II (RNAp II), which may inhibit the formation of a transcription initiation complex. The chain is Cyclin-C (cic-1) from Caenorhabditis elegans.